The following is a 54-amino-acid chain: Small ribosomal subunit protein uS14 (54 aa).

Zn(2+)-binding residues include Cys-19, Cys-22, Cys-37, and Cys-40.

The protein belongs to the universal ribosomal protein uS14 family. Zinc-binding uS14 subfamily. In terms of assembly, part of the 30S ribosomal subunit. Requires Zn(2+) as cofactor.

Binds 16S rRNA, required for the assembly of 30S particles. The chain is Small ribosomal subunit protein uS14 from Sulfurisphaera tokodaii (strain DSM 16993 / JCM 10545 / NBRC 100140 / 7) (Sulfolobus tokodaii).